We begin with the raw amino-acid sequence, 465 residues long: Hepatocyte nuclear factor 6 (465 aa).

4 disordered regions span residues 17–55, 120–141, 264–290, and 442–465; these read SHEP…SMGM, DKFP…HQRL, LLGT…GQME, and DKWQ…CTKA. Over residues 123 to 140 the composition is skewed to basic residues; it reads PHHHHHHHHHHHPHHHQR. Positions 273–288 are enriched in polar residues; the sequence is PSVTGAQVSNGSNSGQ. The CUT DNA-binding region spans 283–369; that stretch reads GSNSGQMEEI…QRMSALRLAA (87 aa). A DNA-binding region (homeobox) is located at residues 385–444; it reads PKKPRLVFTDVQRRTLHAIFKENKRPSKELQITISQQLGLELSTVSNFFMNARRRSLDKW. The span at 448–465 shows a compositional bias: low complexity; it reads GSSNSGNSSSSSSTCTKA.

It belongs to the CUT homeobox family. Binds DNA as a monomer. In terms of tissue distribution, highly expressed in liver; lower expression in testis and skin.

The protein resides in the nucleus. In terms of biological role, transcriptional activator. Binds the consensus sequence 5'-DHWATTGAYTWWD-3' on a variety of gene promoters such as those of HNF3B and TTR. Important for liver genes transcription. The protein is Hepatocyte nuclear factor 6 (ONECUT1) of Homo sapiens (Human).